We begin with the raw amino-acid sequence, 50 residues long: Kappa-actitoxin-Bcs4a (50 aa).

Belongs to the sea anemone type 5 potassium channel toxin family. Post-translationally, contains 4 disulfide bonds.

Its subcellular location is the secreted. The protein localises to the nematocyst. In terms of biological role, inhibits voltage-gated potassium channels (Kv1/KCNA). Is potent on Drosophila Shaker IR channels (IC(50)=94.25 nM), and rKv1.2/KCNA2 (IC(50)=172.59 nM), and moderately active on hKv1.3/KCNA3 (IC(50)=1006.48 nM), rKv1.6/KCNA6 (IC(50)=2245.93 nM), and Kv1.1/KCNA1 (IC(50) around 3 uM). In vivo, induces a rapid increase in swimming speed on zebrafish larvae, as well as death which occurs between 2 and 18 hours later. Also paralyzes swimming crabs (C.danae) when injected at the junction between the body and the walking leg. The chain is Kappa-actitoxin-Bcs4a from Bunodosoma caissarum (Sea anemone).